The sequence spans 345 residues: Phosphoribosylformylglycinamidine cyclo-ligase (345 aa).

This sequence belongs to the AIR synthase family.

The protein resides in the cytoplasm. The catalysed reaction is 2-formamido-N(1)-(5-O-phospho-beta-D-ribosyl)acetamidine + ATP = 5-amino-1-(5-phospho-beta-D-ribosyl)imidazole + ADP + phosphate + H(+). It participates in purine metabolism; IMP biosynthesis via de novo pathway; 5-amino-1-(5-phospho-D-ribosyl)imidazole from N(2)-formyl-N(1)-(5-phospho-D-ribosyl)glycinamide: step 2/2. This chain is Phosphoribosylformylglycinamidine cyclo-ligase, found in Enterobacter sp. (strain 638).